The sequence spans 137 residues: Lysozyme (137 aa).

The N-terminal stretch at 1–20 (MSAVLVLALVLLSLTCVTDA) is a signal peptide. Positions 21–134 (ISDACLTCIC…WNAVKNQGCS (114 aa)) constitute an I-type lysozyme domain. 6 disulfide bridges follow: C25–C102, C30–C37, C42–C51, C64–C84, C74–C80, and C98–C116. The active-site Proton donor is E33. The Nucleophile role is filled by D45. 57–63 (KKSYWID) serves as a coordination point for substrate. Residues Y88 and 109 to 111 (HNG) contribute to the substrate site.

This sequence belongs to the glycosyl hydrolase 22 family. Type-I lysozyme subfamily.

Its subcellular location is the secreted. The catalysed reaction is Hydrolysis of (1-&gt;4)-beta-linkages between N-acetylmuramic acid and N-acetyl-D-glucosamine residues in a peptidoglycan and between N-acetyl-D-glucosamine residues in chitodextrins.. In terms of biological role, has bacteriolytic activity. May play a role in digestion and in the host defense mechanisms against invading microbes. In Ostrea edulis (Native oyster), this protein is Lysozyme (lysoz).